A 382-amino-acid chain; its full sequence is Innexin-8 (382 aa).

4 helical membrane passes run 29–49 (LITA…TYVG), 103–123 (QWSS…KFLW), 187–207 (VIKI…AIFL), and 270–290 (IFLF…IAHF).

The protein belongs to the pannexin family.

The protein resides in the cell membrane. The protein localises to the cell junction. It is found in the gap junction. In terms of biological role, structural component of the gap junctions. This Caenorhabditis elegans protein is Innexin-8 (inx-8).